The primary structure comprises 257 residues: Nickel import system ATP-binding protein NikD (257 aa).

In terms of domain architecture, ABC transporter spans isoleucine 4–isoleucine 245. Glycine 37–serine 44 provides a ligand contact to ATP.

The protein belongs to the ABC transporter superfamily. As to quaternary structure, the complex is composed of two ATP-binding proteins (NikD and NikE), two transmembrane proteins (NikB and NikC) and a solute-binding protein (NikA).

It is found in the cell membrane. The enzyme catalyses Ni(2+)(out) + ATP + H2O = Ni(2+)(in) + ADP + phosphate + H(+). Functionally, part of the ABC transporter complex NikABCDE (Opp2) involved in nickel import. Probably responsible for energy coupling to the transport system. This Staphylococcus aureus (strain bovine RF122 / ET3-1) protein is Nickel import system ATP-binding protein NikD.